Here is a 350-residue protein sequence, read N- to C-terminus: Inhibin beta E chain (350 aa).

Positions 1–19 (MRLPDVQLWLVLLWALVRA) are cleaved as a signal peptide. A propeptide spanning residues 20–236 (QGTGSVCPSC…EPGAGRARRR (217 aa)) is cleaved from the precursor. Asn198 carries an N-linked (GlcNAc...) asparagine glycan. Cystine bridges form between Cys240-Cys248, Cys247-Cys315, Cys276-Cys347, and Cys280-Cys349.

The protein belongs to the TGF-beta family. In terms of assembly, homodimeric or heterodimeric through association with alpha and beta subunits, linked by one or more disulfide bonds. Inhibins are heterodimers of one alpha and one beta subunit. Activins are homo- or heterodimers of beta subunits only.

It localises to the secreted. In terms of biological role, inhibins and activins inhibit and activate, respectively, the secretion of follitropin by the pituitary gland. Inhibins/activins are involved in regulating a number of diverse functions such as hypothalamic and pituitary hormone secretion, gonadal hormone secretion, germ cell development and maturation, erythroid differentiation, insulin secretion, nerve cell survival, embryonic axial development or bone growth, depending on their subunit composition. Inhibins appear to oppose the functions of activins. Its function is as follows. Activin E is a homodimer of INHBE secreted by the liver that plays a crucial role in regulating metabolic homeostasis particularly in lipid metabolism and energy homeostasis. Plays a central role in the regulation of adipose tissue lipolysis by preventing the influx of fatty acids from adipose tissue into the liver. Mechanistically, signals via ACVR1C to activate SMAD2/3 signaling, suppressing PPARG target genes in adipose tissue, thereby reducing liver lipid content and improving glycemic control. Induces beige adipocyte formation and thermogenesis in response to cold exposure. In Homo sapiens (Human), this protein is Inhibin beta E chain (INHBE).